Reading from the N-terminus, the 324-residue chain is Ribose 1,5-bisphosphate isomerase (324 aa).

Substrate-binding positions include 22 to 25 (RGAG) and Arg65. Catalysis depends on Cys135, which acts as the Proton acceptor. Position 137–139 (137–139 (SKA)) interacts with substrate. Residue Asp204 is the Proton donor of the active site. Substrate-binding positions include 214 to 215 (NK) and Lys240.

Belongs to the eIF-2B alpha/beta/delta subunits family. R15P isomerase subfamily.

The catalysed reaction is alpha-D-ribose 1,5-bisphosphate = D-ribulose 1,5-bisphosphate. Catalyzes the isomerization of ribose 1,5-bisphosphate (R15P) to ribulose 1,5-bisphosphate (RuBP), the CO(2) acceptor and substrate for RubisCO. Functions in an archaeal AMP degradation pathway, together with AMP phosphorylase and RubisCO. This chain is Ribose 1,5-bisphosphate isomerase, found in Pyrococcus horikoshii (strain ATCC 700860 / DSM 12428 / JCM 9974 / NBRC 100139 / OT-3).